The following is a 149-amino-acid chain: Leghemoglobin (149 aa).

The region spanning 3–147 (AFSEKQESLV…LAAAIKKAMG (145 aa)) is the Globin domain. Residue Tyr31 is modified to Nitrated tyrosine. Ser46 is a binding site for heme b. Phosphoserine is present on Ser46. An O2-binding site is contributed by His62. Lys65, His94, and Lys97 together coordinate heme b. Tyr135 carries the nitrated tyrosine modification.

It belongs to the plant globin family. In terms of assembly, monomer. Nitrated in effective nodules and particularly in hypoxic conditions; this mechanism may play a protective role in the symbiosis by buffering toxic peroxynitrite NO(2)(-). Nitration level decrease during nodule senescence. In terms of processing, phosphorylation at Ser-46 disrupts the molecular environment of its porphyrin ring oxygen binding pocket, thus leading to a reduced oxygen consumption and to the delivery of oxygen O(2) to symbiosomes. Root nodules.

It localises to the cytoplasm. Its subcellular location is the cytosol. The protein resides in the nucleus. Its function is as follows. Leghemoglobin that reversibly binds oxygen O(2) through a pentacoordinated heme iron. In root nodules, facilitates the diffusion of oxygen to the bacteroids while preventing the bacterial nitrogenase from being inactivated by buffering dioxygen, nitric oxide and carbon monoxide, and promoting the formation of reactive oxygen species (ROS, e.g. H(2)O(2)). This role is essential for symbiotic nitrogen fixation (SNF). The sequence is that of Leghemoglobin from Canavalia lineata (Beach bean).